A 2340-amino-acid polypeptide reads, in one-letter code: Proto-oncogene tyrosine-protein kinase ROS (2340 aa).

Positions 1 to 28 (MKNICWLTLKLVKFVVLGCIIWISVAQS) are cleaved as a signal peptide. Residues 29–1854 (TVLSSCLTSC…EDGVWITETS (1826 aa)) are Extracellular-facing. Asn-53 carries N-linked (GlcNAc...) asparagine glycosylation. 2 consecutive Fibronectin type-III domains span residues 111–206 (LPTA…VPET) and 207–295 (APLI…PSPS). Residues Asn-334 and Asn-362 are each glycosylated (N-linked (GlcNAc...) asparagine). Residues 567–667 (LPGHPQEVSV…APSVGTTLVP (101 aa)) enclose the Fibronectin type-III 3 domain. Residues Asn-935 and Asn-1011 are each glycosylated (N-linked (GlcNAc...) asparagine). Fibronectin type-III domains follow at residues 943–1038 (IPDP…SVPS) and 1039–1146 (APEN…TSEI). An N-linked (GlcNAc...) asparagine glycan is attached at Asn-1243. 4 Fibronectin type-III domains span residues 1442-1549 (ASDM…TKSG), 1550-1649 (VPGA…VNMF), 1651-1744 (TPEK…TKAG), and 1745-1846 (VPSK…LVED). Asn-1676 carries N-linked (GlcNAc...) asparagine glycosylation. A helical transmembrane segment spans residues 1855–1875 (FILTIIVGIFLVATVPLTFVW). Residues 1876–2340 (HRSLKSHKAS…AHSEHGDVSE (465 aa)) are Cytoplasmic-facing. The Protein kinase domain occupies 1938-2216 (LSLRLLLGSG…QLQLFRNVFL (279 aa)). ATP contacts are provided by residues 1944-1952 (LGSGAFGEV) and Lys-1973. Asp-2072 functions as the Proton acceptor in the catalytic mechanism. Residues Tyr-2267 and Tyr-2327 each carry the phosphotyrosine; by autocatalysis modification.

It belongs to the protein kinase superfamily. Tyr protein kinase family. Insulin receptor subfamily. As to quaternary structure, interacts with PTPN11; may activate the PI3 kinase-mTOR signaling pathway. Interacts with VAV3; constitutive interaction mediating VAV3 phosphorylation. Interacts with PTPN6 (via SH2 1 domain); the interaction is direct and promotes ROS1 dephosphorylation. Phosphorylated. Probably autophosphorylates. Phosphorylation at Tyr-2267 and/or Tyr-2327 recruits PTPN11. Phosphorylation at Tyr-2267 is required for the interaction with PTPN6 that mediates ROS1 dephosphorylation. Phosphorylation at Tyr-2267 stimulates the kinase activity and the activation of the ERK1 signaling cascade. In terms of tissue distribution, expressed by epithelial cells of the caput epididymis (at protein level).

It localises to the cell membrane. It catalyses the reaction L-tyrosyl-[protein] + ATP = O-phospho-L-tyrosyl-[protein] + ADP + H(+). Its activity is regulated as follows. Inhibited by dephosphorylation by PTPN6. Functionally, receptor tyrosine kinase (RTK) that plays a role in epithelial cell differentiation and regionalization of the proximal epididymal epithelium. NELL2 is an endogenous ligand for ROS1. Upon endogenous stimulation by NELL2, ROS1 activates the intracellular signaling pathway and triggers epididymal epithelial differentiation and subsequent sperm maturation. May activate several downstream signaling pathways related to cell differentiation, proliferation, growth and survival including the PI3 kinase-mTOR signaling pathway. Mediates the phosphorylation of PTPN11, an activator of this pathway. May also phosphorylate and activate the transcription factor STAT3 to control anchorage-independent cell growth. Mediates the phosphorylation and the activation of VAV3, a guanine nucleotide exchange factor regulating cell morphology. May activate other downstream signaling proteins including AKT1, MAPK1, MAPK3, IRS1, and PLCG2. In Mus musculus (Mouse), this protein is Proto-oncogene tyrosine-protein kinase ROS (Ros1).